The sequence spans 383 residues: L-lactate dehydrogenase (383 aa).

The 380-residue stretch at 1–380 (MIISSGNDYR…NTDCLVQAIK (380 aa)) folds into the FMN hydroxy acid dehydrogenase domain. Position 24 (Y24) interacts with substrate. Positions 106 and 127 each coordinate FMN. Y129 serves as a coordination point for substrate. T155 contributes to the FMN binding site. R164 contributes to the substrate binding site. K251 is an FMN binding site. The Proton acceptor role is filled by H275. A substrate-binding site is contributed by R278. Residue 306–330 (DSGIRNGLDVVRMLALGADTVLLGR) coordinates FMN.

Belongs to the FMN-dependent alpha-hydroxy acid dehydrogenase family. FMN is required as a cofactor.

It is found in the cell inner membrane. It carries out the reaction (S)-lactate + A = pyruvate + AH2. In terms of biological role, catalyzes the conversion of L-lactate to pyruvate. Is coupled to the respiratory chain. The polypeptide is L-lactate dehydrogenase (Acinetobacter baumannii (strain SDF)).